The sequence spans 92 residues: Putative septation protein SpoVG (92 aa).

The protein belongs to the SpoVG family.

Could be involved in septation. The sequence is that of Putative septation protein SpoVG from Thermoanaerobacter pseudethanolicus (strain ATCC 33223 / 39E) (Clostridium thermohydrosulfuricum).